We begin with the raw amino-acid sequence, 183 residues long: MVGGDRRFKVSKLMAYILRHSPWEFGLEPDEEGFVELADLIRAIKTVYPWVTEEFIKEIVEKDSKGRYEIRGSKIRARYGHSYPVVLKHEEDTESKVLYHGTIRENLKGILKEGIKPMKRQYVHLSLSYEDAYYTGRRHGKDVVVLLIDAECLRRKGYKILKAGKRVRIVKHVPVECISEILD.

This sequence belongs to the KptA/TPT1 family.

Removes the 2'-phosphate from RNA via an intermediate in which the phosphate is ADP-ribosylated by NAD followed by a presumed transesterification to release the RNA and generate ADP-ribose 1''-2''-cyclic phosphate (APPR&gt;P). May function as an ADP-ribosylase. The chain is Probable RNA 2'-phosphotransferase from Pyrococcus furiosus (strain ATCC 43587 / DSM 3638 / JCM 8422 / Vc1).